Here is a 227-residue protein sequence, read N- to C-terminus: Ornithine decarboxylase antizyme 1 (227 aa).

The protein belongs to the ODC antizyme family. Interacts with ODC1 and thereby sterically blocks ODC homodimerization. Forms a ternary complex with PSMB4 and OAZ1 before PSMB4 is incorporated into the 20S proteasome. Interacts with AZIN2; this interaction disrupts the interaction between the antizyme and ODC1. Interacts with FAM171A1.

Functionally, ornithine decarboxylase (ODC) antizyme protein that negatively regulates ODC activity and intracellular polyamine biosynthesis and uptake in response to increased intracellular polyamine levels. Binds to ODC monomers, inhibiting the assembly of the functional ODC homodimer, and targets the monomers for ubiquitin-independent proteolytic destruction by the 26S proteasome. Triggers ODC degradation by inducing the exposure of a cryptic proteasome-interacting surface of ODC. Stabilizes AZIN2 by interfering with its ubiquitination. Also inhibits cellular uptake of polyamines by inactivating the polyamine uptake transporter. SMAD1/OAZ1/PSMB4 complex mediates the degradation of the CREBBP/EP300 repressor SNIP1. Involved in the translocation of AZIN2 from ER-Golgi intermediate compartment (ERGIC) to the cytosol. This Rattus norvegicus (Rat) protein is Ornithine decarboxylase antizyme 1 (Oaz1).